Reading from the N-terminus, the 124-residue chain is Large ribosomal subunit protein eL31 (124 aa).

It belongs to the eukaryotic ribosomal protein eL31 family.

This is Large ribosomal subunit protein eL31 (RpL31) from Spodoptera frugiperda (Fall armyworm).